Here is a 379-residue protein sequence, read N- to C-terminus: Cobalt-precorrin-5B C(1)-methyltransferase (379 aa).

Belongs to the CbiD family.

The enzyme catalyses Co-precorrin-5B + S-adenosyl-L-methionine = Co-precorrin-6A + S-adenosyl-L-homocysteine. It functions in the pathway cofactor biosynthesis; adenosylcobalamin biosynthesis; cob(II)yrinate a,c-diamide from sirohydrochlorin (anaerobic route): step 6/10. Catalyzes the methylation of C-1 in cobalt-precorrin-5B to form cobalt-precorrin-6A. The polypeptide is Cobalt-precorrin-5B C(1)-methyltransferase (Salmonella paratyphi A (strain ATCC 9150 / SARB42)).